A 150-amino-acid chain; its full sequence is Histone H3-like centromeric protein A (150 aa).

The disordered stretch occupies residues 1–55; the sequence is MRPGSTPPSRRKSRPPRRVSPPLPTTSRTSPRRPHAQQQRRASRASPKKRFRPGT. The segment covering 41-53 has biased composition (basic residues); sequence RASRASPKKRFRP. Residues 53 to 150 are H3-like; the sequence is PGTRALMEIR…RIRGVNEGLG (98 aa).

This sequence belongs to the histone H3 family. As to quaternary structure, component of centromeric nucleosomes, where DNA is wrapped around a histone octamer core. The octamer contains two molecules each of H2A, H2B, CENPA and H4 assembled in one CENPA-H4 heterotetramer and two H2A-H2B heterodimers. CENPA modulates the DNA-binding characteristics of nucleosomes so that protruding DNA ends have higher flexibility than in nucleosomes containing conventional histone H3.

The protein resides in the nucleus. The protein localises to the chromosome. It is found in the centromere. Its function is as follows. Histone H3-like nucleosomal protein that is specifically found in centromeric nucleosomes. Replaces conventional H3 in the nucleosome core of centromeric chromatin that serves as an assembly site for the inner kinetochore. The presence of CENPA subtly modifies the nucleosome structure and the way DNA is wrapped around the nucleosome and gives rise to protruding DNA ends that are less well-ordered and rigid compared to nucleosomes containing histone H3. May serve as an epigenetic mark that propagates centromere identity through replication and cell division. Required for recruitment and assembly of kinetochore proteins, and as a consequence required for progress through mitosis, chromosome segregation and cytokinesis. This chain is Histone H3-like centromeric protein A (cenpa), found in Xenopus laevis (African clawed frog).